The following is a 295-amino-acid chain: N-acetylmuramic acid 6-phosphate etherase (295 aa).

Positions 53 to 216 constitute an SIS domain; sequence AIQRFNNGGR…STMTMIGVGK (164 aa). Catalysis depends on glutamate 81, which acts as the Proton donor. Glutamate 112 is a catalytic residue.

Belongs to the GCKR-like family. MurNAc-6-P etherase subfamily. Homodimer.

It carries out the reaction N-acetyl-D-muramate 6-phosphate + H2O = N-acetyl-D-glucosamine 6-phosphate + (R)-lactate. It functions in the pathway amino-sugar metabolism; N-acetylmuramate degradation. In terms of biological role, specifically catalyzes the cleavage of the D-lactyl ether substituent of MurNAc 6-phosphate, producing GlcNAc 6-phosphate and D-lactate. The polypeptide is N-acetylmuramic acid 6-phosphate etherase (Staphylococcus epidermidis (strain ATCC 35984 / DSM 28319 / BCRC 17069 / CCUG 31568 / BM 3577 / RP62A)).